The sequence spans 451 residues: Phosphoglucosamine mutase (451 aa).

Serine 101 acts as the Phosphoserine intermediate in catalysis. Mg(2+)-binding residues include serine 101, aspartate 240, aspartate 242, and aspartate 244. The residue at position 101 (serine 101) is a Phosphoserine.

It belongs to the phosphohexose mutase family. The cofactor is Mg(2+). In terms of processing, activated by phosphorylation.

The catalysed reaction is alpha-D-glucosamine 1-phosphate = D-glucosamine 6-phosphate. Catalyzes the conversion of glucosamine-6-phosphate to glucosamine-1-phosphate. In Streptococcus pyogenes serotype M3 (strain SSI-1), this protein is Phosphoglucosamine mutase.